Here is a 254-residue protein sequence, read N- to C-terminus: Alcohol dehydrogenase (254 aa).

10 to 33 (FVAGLGGIGLDTSREIVKSGPKNL) serves as a coordination point for NAD(+). A substrate-binding site is contributed by serine 138. The Proton acceptor role is filled by tyrosine 151.

This sequence belongs to the short-chain dehydrogenases/reductases (SDR) family. Homodimer.

The enzyme catalyses a primary alcohol + NAD(+) = an aldehyde + NADH + H(+). It carries out the reaction a secondary alcohol + NAD(+) = a ketone + NADH + H(+). The sequence is that of Alcohol dehydrogenase (Adh) from Drosophila picticornis (Fruit fly).